Consider the following 302-residue polypeptide: Quinolinate synthase (302 aa).

Iminosuccinate is bound by residues histidine 24 and serine 41. Cysteine 86 contacts [4Fe-4S] cluster. Iminosuccinate-binding positions include 112-114 (YVN) and serine 129. Cysteine 171 provides a ligand contact to [4Fe-4S] cluster. Iminosuccinate is bound by residues 197–199 (HPE) and threonine 214. Cysteine 259 lines the [4Fe-4S] cluster pocket.

It belongs to the quinolinate synthase family. Type 2 subfamily. It depends on [4Fe-4S] cluster as a cofactor.

Its subcellular location is the cytoplasm. It catalyses the reaction iminosuccinate + dihydroxyacetone phosphate = quinolinate + phosphate + 2 H2O + H(+). Its pathway is cofactor biosynthesis; NAD(+) biosynthesis; quinolinate from iminoaspartate: step 1/1. Its function is as follows. Catalyzes the condensation of iminoaspartate with dihydroxyacetone phosphate to form quinolinate. The polypeptide is Quinolinate synthase (Dehalococcoides mccartyi (strain ATCC BAA-2266 / KCTC 15142 / 195) (Dehalococcoides ethenogenes (strain 195))).